Here is a 430-residue protein sequence, read N- to C-terminus: Cortical fragment-lytic enzyme (430 aa).

2 consecutive LysM domains span residues 3–47 (QIVT…ALIV) and 52–96 (NNYY…QLYV). In terms of domain architecture, GH18 spans 104 to 430 (VESIAYLQPS…VENFTITKKG (327 aa)). E219 serves as the catalytic Proton donor.

Belongs to the glycosyl hydrolase 18 family. Chitinase class II subfamily.

The protein resides in the spore cortex. Inhibited by diethylpyrocarbonate. N-acetylglucosaminidase involved in cortex peptidoglycan degradation during germination. Cleaves only partially degraded spore peptidoglycans. Recognizes muramic acid delta-lactam residues specific to spore peptidoglycans. This is Cortical fragment-lytic enzyme from Bacillus cereus.